Consider the following 662-residue polypeptide: MAAENEASQESALGAYSPVDYMSITSFPRLPEDEPAPAVPLRGRKDEDAFLGDPDTDPDSFLKSARLQRLPSSSSEMGSQDGSPLRETRKDPFSAAASECSCRQDGLTVIVTACLTFATGVTVALIMQIYFGDPQIFHQGAVVTDAARCTSLGIEVLSKQGSSVDAAVAAALCLGIVAPHSSGLGGGGVMLVHDIRRNKSHLIDFRESAPGALREEALQRSWETKPGLLVGVPGMVKGLHEAHQLYGRLPWSQVLAFAAAVAQDGFNVTHDLAQALAEQPPPNASDRFRETFLPMGHPPLPGSLLRRPDLAAVLEVLGTYGPAAFYAGGNLTLEMVAEAQHAGGVITEEDFSNYSALLEKPVCGVYRGHLVLSPRPPHTGPALISALNILEGFNLTSLVSREQALHWVAETLKIALALASRLGDPIYDSTITESMDDMLSKVEAAYFRGQINDSQAAPVPLLPIYELNGAPTAAQVLIMGPDDFIVAMVSSLNRPFGSGLITPSGILLNSQMLDFSWPNRTANHPAPSLENSVQPGKRPLSFLLPTVVRPAEGLCGTYLALGANGAARGLSGLTQVLLNVLTLNRNLSDSLARGRLHPDLQTNLLQVDSEFTEEEIEFLEARGHHVEKVDVLSWVHGSRRTNNFIIGVKDPRSPDAAGATIL.

Residues 1-106 (MAAENEASQE…ASECSCRQDG (106 aa)) are Cytoplasmic-facing. Serine 17, serine 72, serine 79, and serine 83 each carry phosphoserine. A disordered region spans residues 26-90 (SFPRLPEDEP…DGSPLRETRK (65 aa)). The segment covering 72 to 83 (SSSSEMGSQDGS) has biased composition (low complexity). Residues 107–127 (LTVIVTACLTFATGVTVALIM) form a helical; Signal-anchor for type II membrane protein membrane-spanning segment. The Extracellular segment spans residues 128–662 (QIYFGDPQIF…SPDAAGATIL (535 aa)). Asparagine 198, asparagine 267, asparagine 283, asparagine 330, asparagine 353, asparagine 394, asparagine 452, asparagine 519, and asparagine 586 each carry an N-linked (GlcNAc...) asparagine glycan.

This sequence belongs to the gamma-glutamyltransferase family. As to quaternary structure, heterodimer composed of the light and heavy chains. The active site is located in the light chain. In terms of processing, cleaved by autocatalysis into a large and a small subunit and the autocatalytic cleavage is essential to the functional activation of the enzyme.

It is found in the membrane. It catalyses the reaction an N-terminal (5-L-glutamyl)-[peptide] + an alpha-amino acid = 5-L-glutamyl amino acid + an N-terminal L-alpha-aminoacyl-[peptide]. The catalysed reaction is glutathione + H2O = L-cysteinylglycine + L-glutamate. The enzyme catalyses an S-substituted glutathione + H2O = an S-substituted L-cysteinylglycine + L-glutamate. Its pathway is sulfur metabolism; glutathione metabolism. In terms of biological role, hydrolyzes and transfers gamma-glutamyl moieties from glutathione and other gamma-glutamyl compounds to acceptors. The polypeptide is Glutathione hydrolase 7 (Bos taurus (Bovine)).